The sequence spans 104 residues: Integration host factor subunit alpha (104 aa).

It belongs to the bacterial histone-like protein family. As to quaternary structure, heterodimer of an alpha and a beta chain.

Functionally, this protein is one of the two subunits of integration host factor, a specific DNA-binding protein that functions in genetic recombination as well as in transcriptional and translational control. The chain is Integration host factor subunit alpha from Bartonella quintana (strain Toulouse) (Rochalimaea quintana).